Reading from the N-terminus, the 423-residue chain is LysM domain-containing GPI-anchored protein 3 (423 aa).

The signal sequence occupies residues 1–24 (MKNPEKPLLLFLILASSLASMATA). 4 disulfides stabilise this stretch: cysteine 31–cysteine 97, cysteine 37–cysteine 160, cysteine 95–cysteine 158, and cysteine 97–cysteine 160. Residues 107 to 154 (THYKTRTSDTLGSIADSVYGGLVSPEQIQVANSETDLSVLDVGTKLVI) enclose the LysM 1 domain. Asparagine 162 carries an N-linked (GlcNAc...) asparagine glycan. A LysM 2 domain is found at 173-216 (LSYVVRGIDTMAGIAKRFSTSVTDLTNVNAMGAPDINPGDILAV). Intrachain disulfides connect cysteine 221–cysteine 253 and cysteine 248–cysteine 276. N-linked (GlcNAc...) asparagine glycosylation occurs at asparagine 238. Asparagine 285 carries an N-linked (GlcNAc...) asparagine glycan. The GPI-anchor amidated glycine moiety is linked to residue glycine 394. Residues 395-423 (GSISIASCPLSYYSFIALLIPIGSCFFVF) constitute a propeptide, removed in mature form.

As to quaternary structure, interacts with peptidoglycans.

Its subcellular location is the cell membrane. Its function is as follows. Required as a cell surface receptor for peptidoglycan (PGN) elicitor signaling leading to innate immunity. Plays an essential role in detecting PGNs and restricting bacterial growth (of Pseudomonas syringae pv. tomato DC3000 for example). In Arabidopsis thaliana (Mouse-ear cress), this protein is LysM domain-containing GPI-anchored protein 3 (LYM3).